Here is a 178-residue protein sequence, read N- to C-terminus: Nascent polypeptide-associated complex subunit alpha (178 aa).

The NAC-A/B domain occupies 20–84; the sequence is SKNEKKAREL…AKVDDMNKRI (65 aa). Low complexity predominate over residues 87-104; the sequence is AQAQQEQQEALTKAAADA. The segment at 87–142 is disordered; that stretch reads AQAQQEQQEALTKAAADAETADKSPESITNDLQNASLEDKTVEEDEGEVDETGLDS. Polar residues predominate over residues 112 to 122; sequence ESITNDLQNAS. The segment covering 127–139 has biased composition (acidic residues); it reads TVEEDEGEVDETG. A UBA domain is found at 140 to 178; that stretch reads LDSKDIEIIVEQTQVSRAKAVKALRAHKGDMVNAIMELS.

This sequence belongs to the NAC-alpha family. Part of the nascent polypeptide-associated complex (NAC), consisting of EGD2 and EGD1. NAC associates with ribosomes via EGD1.

It localises to the cytoplasm. The protein localises to the nucleus. In terms of biological role, component of the nascent polypeptide-associated complex (NAC), a dynamic component of the ribosomal exit tunnel, protecting the emerging polypeptides from interaction with other cytoplasmic proteins to ensure appropriate nascent protein targeting. The NAC complex also promotes mitochondrial protein import by enhancing productive ribosome interactions with the outer mitochondrial membrane and blocks the inappropriate interaction of ribosomes translating non-secretory nascent polypeptides with translocation sites in the membrane of the endoplasmic reticulum. EGD2 may also be involved in transcription regulation. The chain is Nascent polypeptide-associated complex subunit alpha (EGD2) from Meyerozyma guilliermondii (strain ATCC 6260 / CBS 566 / DSM 6381 / JCM 1539 / NBRC 10279 / NRRL Y-324) (Yeast).